Consider the following 370-residue polypeptide: Probable neutral protease 2 homolog ARB_03949 (370 aa).

Positions 1-19 (MQLVAALAALGALVAPAVA) are cleaved as a signal peptide. Residues 20-188 (YPHAPMNETL…SIHSRALQKR (169 aa)) constitute a propeptide that is removed on maturation. Cystine bridges form between Cys196/Cys267 and Cys274/Cys292. Residue His316 participates in Zn(2+) binding. The active site involves Glu317. Residues His320 and Asp331 each contribute to the Zn(2+) site.

The protein belongs to the peptidase M35 family. Requires Zn(2+) as cofactor.

The protein localises to the secreted. The catalysed reaction is Preferential cleavage of bonds with hydrophobic residues in P1'. Also 3-Asn-|-Gln-4 and 8-Gly-|-Ser-9 bonds in insulin B chain.. In terms of biological role, probable secreted metalloprotease that shows high activities on basic nuclear substrates such as histone and protamine. May be involved in virulence. The chain is Probable neutral protease 2 homolog ARB_03949 from Arthroderma benhamiae (strain ATCC MYA-4681 / CBS 112371) (Trichophyton mentagrophytes).